The chain runs to 565 residues: MKMRPRYSVIASAVSLGFVLSKSVMALGQPDTGSLNRELEQRRIQPEAKPSGELFNQAAKSPYTAQYKQELKFPLTQVQILDRNNQEVVTDELAHILKNYVGKEVSLSDLSNLANEISEFYRNNNYLVAKAILPPQEIEQGTVKILLLKGNVGEIRLQNHSALSNKFVSRLSNTTVNTSEFILKDELEKFALTINDVPGVNAGLQLSAGKKVGEANLLIKINDAKRFSSYVSVDNQGNKYTGRYRLAAGTKVNNLTGWGDELKLDLLSSNQANLKNARIDYSSLIDGYSTRFGVTANYLHYKLGGNFKSLQSQGHSHNLGAYLLHPTIRTPNFRLSTKVSFNHQNLTDEQQAVTVKQKRKINSLTVGIDGSWNLIKDGTTYFSLSTLFGNLANQTNEKKHNAKEDFQPQSHFTVYNYRLSHEQILPKSFAFNIGINGQFADKTLESSQKMLLGGLSGVRGHQAGAASVDEGHLIQTEFKHYLPVFSQSVLVSSLFYDYGFGKYYKNSQSLAQSVKNSVKLQSVGAGLSFSDAGSYAINVSVAKPLDNNIDNADKHQFWLSMIKTF.

The signal sequence occupies residues 1–26 (MKMRPRYSVIASAVSLGFVLSKSVMA). A POTRA domain is found at 73–150 (FPLTQVQILD…GTVKILLLKG (78 aa)).

The protein belongs to the TPS (TC 1.B.20) family.

Its subcellular location is the cell outer membrane. Likely functions in the release of soluble HxuA from the cell. In terms of biological role, probable member of a two partner secretion pathway (TPS) in which it mediates the secretion of HuxA. The sequence is that of Heme/hemopexin transporter protein HuxB (hxuB) from Haemophilus influenzae (strain 86-028NP).